Reading from the N-terminus, the 269-residue chain is MNAHVTPDSVTADSDETWTVAGRTFRSRLIVGTGKYKDYATNAAAARAAGAEIVTVAVRRVNLTDPSQPLLVDYVKPTEFTYLPNTAGCFTGEDAVRTLRLAREAGGWDLVKLEVLSDPKTLFPDMEETLRSLKLLVADGFQVMVYCSDDPVYARKLEEAGAVAIMPLGAPIGSGLGIQNRVNLRIIIENAKVPVLVDAGVGTASDAAIGMELGCDAILMNTAIAEAKDPIRMAKAMKHAVIAGREAYLAGRMQKRLYADPSSPLAGLI.

The active-site Schiff-base intermediate with DXP is the Lys-112. Residues Gly-173, 199-200 (AG), and 221-222 (NT) each bind 1-deoxy-D-xylulose 5-phosphate.

It belongs to the ThiG family. In terms of assembly, homotetramer. Forms heterodimers with either ThiH or ThiS.

It is found in the cytoplasm. The enzyme catalyses [ThiS sulfur-carrier protein]-C-terminal-Gly-aminoethanethioate + 2-iminoacetate + 1-deoxy-D-xylulose 5-phosphate = [ThiS sulfur-carrier protein]-C-terminal Gly-Gly + 2-[(2R,5Z)-2-carboxy-4-methylthiazol-5(2H)-ylidene]ethyl phosphate + 2 H2O + H(+). It functions in the pathway cofactor biosynthesis; thiamine diphosphate biosynthesis. Catalyzes the rearrangement of 1-deoxy-D-xylulose 5-phosphate (DXP) to produce the thiazole phosphate moiety of thiamine. Sulfur is provided by the thiocarboxylate moiety of the carrier protein ThiS. In vitro, sulfur can be provided by H(2)S. The protein is Thiazole synthase of Caulobacter vibrioides (strain ATCC 19089 / CIP 103742 / CB 15) (Caulobacter crescentus).